Here is a 395-residue protein sequence, read N- to C-terminus: MANFVTDSRNGLTISCAPQDQSHLHPTIRALVMEGDSVIFRGLPHPDIHREAPPAGLRLKDCLVYDSYEGALVNVFWHGGQWWFCTNKKLSIDRASWSASPGSFKRAFVNCLRKMWRDDRSWADLFDRSYMPSFCDANLDKDLGYVFMVFDPEERIVCSDTEQRLRLLATFDRCTNSHSYECSLTLTCGTEVEVPRPICLKNEREFLLHLRSQDPCRVAGVVLIDALDIHYKILPSEYTKVLDARGEQPRLLNRMFQLMEMGPEGEAHIEVLCRYFSDARVAMERAWDVRERIVQCYLDLTEPDSEPQVWMTRRLMEIVRGCRPGTERTMIDEFLRTMTTGQRKAFYKKHACLAGGDNAWISSDAPIKQAKTVQDLVEFPDDNCQDMDELFVVRA.

This sequence belongs to the IIV-6 393L family.

The protein is Immediate-early protein ICP-46 (ICR489) of Dryophytes versicolor (chameleon treefrog).